The sequence spans 373 residues: Chaperone protein DnaJ (373 aa).

Residues 5-70 enclose the J domain; the sequence is DYYEVLGVHR…QQRVIYDQYG (66 aa). The segment at 136 to 214 adopts a CR-type zinc-finger fold; the sequence is GLETKIQIPR…CHGSGRVRGK (79 aa). Zn(2+)-binding residues include Cys149, Cys152, Cys166, Cys169, Cys188, Cys191, Cys202, and Cys205. CXXCXGXG motif repeat units lie at residues 149-156, 166-173, 188-195, and 202-209; these read CGTCDGIG, CPTCQGAG, CPECNGEG, and CEECHGSG.

The protein belongs to the DnaJ family. Homodimer. The cofactor is Zn(2+).

It is found in the cytoplasm. Functionally, participates actively in the response to hyperosmotic and heat shock by preventing the aggregation of stress-denatured proteins and by disaggregating proteins, also in an autonomous, DnaK-independent fashion. Unfolded proteins bind initially to DnaJ; upon interaction with the DnaJ-bound protein, DnaK hydrolyzes its bound ATP, resulting in the formation of a stable complex. GrpE releases ADP from DnaK; ATP binding to DnaK triggers the release of the substrate protein, thus completing the reaction cycle. Several rounds of ATP-dependent interactions between DnaJ, DnaK and GrpE are required for fully efficient folding. Also involved, together with DnaK and GrpE, in the DNA replication of plasmids through activation of initiation proteins. The chain is Chaperone protein DnaJ from Syntrophotalea carbinolica (strain DSM 2380 / NBRC 103641 / GraBd1) (Pelobacter carbinolicus).